An 859-amino-acid chain; its full sequence is Anoctamin-7 (859 aa).

Over M1–G297 the chain is Cytoplasmic. Residues G25–S50 form a disordered region. A helical transmembrane segment spans residues W298–F318. Residues S319–H362 lie on the Extracellular side of the membrane. The chain crosses the membrane as a helical span at residues G363 to W383. Topologically, residues K384–A441 are cytoplasmic. Residues G442–L462 form a helical membrane-spanning segment. Topologically, residues Y463–S492 are extracellular. The helical transmembrane segment at V493 to L513 threads the bilayer. At T514 to T530 the chain is on the cytoplasmic side. A helical membrane pass occupies residues L531–F551. Residues K552–Q651 are Extracellular-facing. Residues F652–N672 form a helical membrane-spanning segment. Topologically, residues N673 to G700 are cytoplasmic. Residues I701 to L721 form a helical membrane-spanning segment. The Extracellular segment spans residues A722–Y780. Residues N746 and N761 are each glycosylated (N-linked (GlcNAc...) asparagine). Residues W781–I801 form a helical membrane-spanning segment. The Cytoplasmic portion of the chain corresponds to G802 to A859.

Belongs to the anoctamin family. Highly expressed in the stomach. Expressed at low levels in small intestine and large intestine.

Its subcellular location is the cell membrane. It is found in the endoplasmic reticulum. The enzyme catalyses a 1,2-diacyl-sn-glycero-3-phospho-L-serine(in) = a 1,2-diacyl-sn-glycero-3-phospho-L-serine(out). It catalyses the reaction a beta-D-galactosyl-(1&lt;-&gt;1')-N-acylsphing-4-enine(out) = a beta-D-galactosyl-(1&lt;-&gt;1')-N-acylsphing-4-enine(in). The catalysed reaction is a 1,2-diacyl-sn-glycero-3-phosphocholine(in) = a 1,2-diacyl-sn-glycero-3-phosphocholine(out). Its function is as follows. Has calcium-dependent phospholipid scramblase activity; scrambles phosphatidylserine, phosphatidylcholine and galactosylceramide. Does not exhibit calcium-activated chloride channel (CaCC) activity. May play a role in cell-cell interactions. This chain is Anoctamin-7 (Ano7), found in Mus musculus (Mouse).